Reading from the N-terminus, the 279-residue chain is S-methyl-5'-thioadenosine phosphorylase (279 aa).

Phosphate contacts are provided by residues serine 28, 70–71 (RH), and 103–104 (SA). Methionine 202 provides a ligand contact to substrate. Phosphate is bound at residue threonine 203. Position 226-228 (226-228 (DYD)) interacts with substrate.

Belongs to the PNP/MTAP phosphorylase family. MTAP subfamily. Homohexamer. Dimer of a homotrimer.

The enzyme catalyses S-methyl-5'-thioadenosine + phosphate = 5-(methylsulfanyl)-alpha-D-ribose 1-phosphate + adenine. It functions in the pathway amino-acid biosynthesis; L-methionine biosynthesis via salvage pathway; S-methyl-5-thio-alpha-D-ribose 1-phosphate from S-methyl-5'-thioadenosine (phosphorylase route): step 1/1. Functionally, catalyzes the reversible phosphorylation of S-methyl-5'-thioadenosine (MTA) to adenine and 5-methylthioribose-1-phosphate. Involved in the breakdown of MTA, a major by-product of polyamine biosynthesis. Responsible for the first step in the methionine salvage pathway after MTA has been generated from S-adenosylmethionine. Has broad substrate specificity with 6-aminopurine nucleosides as preferred substrates. The polypeptide is S-methyl-5'-thioadenosine phosphorylase (Pyrobaculum aerophilum (strain ATCC 51768 / DSM 7523 / JCM 9630 / CIP 104966 / NBRC 100827 / IM2)).